The sequence spans 454 residues: tRNA-2-methylthio-N(6)-dimethylallyladenosine synthase (454 aa).

The region spanning 6 to 122 (RHYHITTFGC…LKDLLESVFD (117 aa)) is the MTTase N-terminal domain. [4Fe-4S] cluster is bound by residues Cys15, Cys51, Cys85, Cys157, Cys161, and Cys164. One can recognise a Radical SAM core domain in the interval 143–381 (RDSKVTAWVN…HLGNLKVAER (239 aa)). Residues 383-447 (QRYFGRIEEV…PFSLTGQPVE (65 aa)) enclose the TRAM domain.

This sequence belongs to the methylthiotransferase family. MiaB subfamily. As to quaternary structure, monomer. [4Fe-4S] cluster is required as a cofactor.

Its subcellular location is the cytoplasm. It carries out the reaction N(6)-dimethylallyladenosine(37) in tRNA + (sulfur carrier)-SH + AH2 + 2 S-adenosyl-L-methionine = 2-methylsulfanyl-N(6)-dimethylallyladenosine(37) in tRNA + (sulfur carrier)-H + 5'-deoxyadenosine + L-methionine + A + S-adenosyl-L-homocysteine + 2 H(+). Catalyzes the methylthiolation of N6-(dimethylallyl)adenosine (i(6)A), leading to the formation of 2-methylthio-N6-(dimethylallyl)adenosine (ms(2)i(6)A) at position 37 in tRNAs that read codons beginning with uridine. This chain is tRNA-2-methylthio-N(6)-dimethylallyladenosine synthase, found in Nostoc punctiforme (strain ATCC 29133 / PCC 73102).